A 233-amino-acid polypeptide reads, in one-letter code: Small ribosomal subunit protein uS3 (233 aa).

In terms of domain architecture, KH type-2 spans 39 to 107; the sequence is VRQFLTKELS…PAQINIAEVR (69 aa).

It belongs to the universal ribosomal protein uS3 family. Part of the 30S ribosomal subunit. Forms a tight complex with proteins S10 and S14.

Functionally, binds the lower part of the 30S subunit head. Binds mRNA in the 70S ribosome, positioning it for translation. In Vibrio vulnificus (strain CMCP6), this protein is Small ribosomal subunit protein uS3.